Consider the following 323-residue polypeptide: Aldo-keto reductase family 1 member C4 (323 aa).

Residues 20–24 and Asp50 each bind NADP(+); that span reads GFGTY. The active-site Proton donor is Tyr55. Residue His117 participates in substrate binding. Residues 166-167, Gln190, 216-221, and 270-280 contribute to the NADP(+) site; these read SN, HSALGT, and KSYNEQRIREN.

Belongs to the aldo/keto reductase family. In terms of assembly, monomer.

It is found in the cytoplasm. Its subcellular location is the cytosol. It carries out the reaction chlordecone alcohol + NADP(+) = chlordecone + NADPH + H(+). The catalysed reaction is a 3alpha-hydroxysteroid + NADP(+) = a 3-oxosteroid + NADPH + H(+). The enzyme catalyses a 3alpha-hydroxysteroid + NAD(+) = a 3-oxosteroid + NADH + H(+). It catalyses the reaction 5alpha-androstane-3alpha,17beta-diol + NADP(+) = 17beta-hydroxy-5alpha-androstan-3-one + NADPH + H(+). It carries out the reaction 5alpha-androstane-3beta,17beta-diol + NADP(+) = 17beta-hydroxy-5alpha-androstan-3-one + NADPH + H(+). The catalysed reaction is 5alpha-androstane-3alpha,17beta-diol + NAD(+) = 17beta-hydroxy-5alpha-androstan-3-one + NADH + H(+). The enzyme catalyses 17beta-estradiol + NADP(+) = estrone + NADPH + H(+). It catalyses the reaction 17beta-estradiol + NAD(+) = estrone + NADH + H(+). It carries out the reaction (20S)-hydroxypregn-4-en-3-one + NADP(+) = progesterone + NADPH + H(+). The catalysed reaction is (20S)-hydroxypregn-4-en-3-one + NAD(+) = progesterone + NADH + H(+). The enzyme catalyses androsterone + NADP(+) = 5alpha-androstan-3,17-dione + NADPH + H(+). It catalyses the reaction testosterone + NADP(+) = androst-4-ene-3,17-dione + NADPH + H(+). It carries out the reaction testosterone + NAD(+) = androst-4-ene-3,17-dione + NADH + H(+). The catalysed reaction is 3alpha-hydroxy-5alpha-androstane 17-O-(beta-D-glucuronate) + NADP(+) = 5alpha-dihydrotestosterone 17-O-(beta-D-glucuronate) + NADPH + H(+). The enzyme catalyses (3beta,5alpha,17beta)-3-hydroxy-androstan-17-yl sulfate + NADP(+) = 5alpha-dihydrotestosterone sulfate + NADPH + H(+). It catalyses the reaction 5alpha-androstane-3alpha,17beta-diol + NAD(+) = androsterone + NADH + H(+). Its pathway is steroid metabolism. In terms of biological role, cytosolic aldo-keto reductase that catalyzes the NADH and NADPH-dependent reduction of ketosteroids to hydroxysteroids. Liver specific enzyme that acts as an NAD(P)(H)-dependent 3-, 17- and 20-ketosteroid reductase on the steroid nucleus and side chain. Displays the ability to catalyze both oxidation and reduction in vitro, but most probably acts as a reductase in vivo since the oxidase activity measured in vitro is inhibited by physiological concentration of NADPH. Acts preferentially as a 3-alpha-hydroxysteroid dehydrogenase (HSD) with a subsidiary 3-beta-HSD activity. Catalyzes efficiently the transformation of the potent androgen 5-alpha-dihydrotestosterone (5alpha-DHT or 17beta-hydroxy-5alpha-androstan-3-one) into the less active form, 5-alpha-androstan-3-alpha,17-beta-diol (3-alpha-diol). Catalyzes the reduction of estrone into 17beta-estradiol but with low efficiency. Metabolizes a broad spectrum of natural and synthetic therapeutic steroid and plays an important role in metabolism of androgens, estrogens, progestereone and conjugated steroids. Catalyzes the biotransformation of the pesticide chlordecone (kepone) to its corresponding alcohol leading to increased biliary excretion of the pesticide and concomitant reduction of its neurotoxicity since bile is the major excretory route. This Macaca fascicularis (Crab-eating macaque) protein is Aldo-keto reductase family 1 member C4 (AKR1C4).